Here is a 153-residue protein sequence, read N- to C-terminus: Actin-related protein 2/3 complex subunit 5-like protein (153 aa).

Phosphoserine is present on serine 64.

It belongs to the ARPC5 family. In terms of assembly, may be a component of the Arp2/3 complex in which it may replace ARPC5.

It localises to the cytoplasm. The protein localises to the cytoskeleton. May function as component of the Arp2/3 complex which is involved in regulation of actin polymerization and together with an activating nucleation-promoting factor (NPF) mediates the formation of branched actin networks. The sequence is that of Actin-related protein 2/3 complex subunit 5-like protein (Arpc5l) from Rattus norvegicus (Rat).